The primary structure comprises 192 residues: dTTP/UTP pyrophosphatase (192 aa).

The active-site Proton acceptor is D75.

It belongs to the Maf family. YhdE subfamily. A divalent metal cation is required as a cofactor.

It is found in the cytoplasm. It catalyses the reaction dTTP + H2O = dTMP + diphosphate + H(+). The catalysed reaction is UTP + H2O = UMP + diphosphate + H(+). Its function is as follows. Nucleoside triphosphate pyrophosphatase that hydrolyzes dTTP and UTP. May have a dual role in cell division arrest and in preventing the incorporation of modified nucleotides into cellular nucleic acids. The polypeptide is dTTP/UTP pyrophosphatase (Bdellovibrio bacteriovorus (strain ATCC 15356 / DSM 50701 / NCIMB 9529 / HD100)).